Consider the following 229-residue polypeptide: Ras-related protein RABA6b (229 aa).

Residue glycine 20–serine 27 coordinates GTP. Positions serine 42 to phenylalanine 50 match the Effector region motif. GTP-binding positions include aspartate 68 to glutamine 72, asparagine 126 to aspartate 129, and serine 156 to alanine 157. S-geranylgeranyl cysteine attachment occurs at residues cysteine 226 and cysteine 227.

Belongs to the small GTPase superfamily. Rab family.

It localises to the cell membrane. In terms of biological role, intracellular vesicle trafficking and protein transport. The chain is Ras-related protein RABA6b (RABA6B) from Arabidopsis thaliana (Mouse-ear cress).